The primary structure comprises 171 residues: Anthrone oxygenase dmxR16 (171 aa).

3 helical membrane-spanning segments follow: residues 21–41 (VIAAAFLSAITAGAMANISMI), 67–87 (GHIILPGICVGTCGLYAFSAL), and 96–116 (YALAGITTLSLVPFTWVFMTP). N-linked (GlcNAc...) asparagine glycans are attached at residues Asn118 and Asn129. The chain crosses the membrane as a helical span at residues 145–165 (WLHATRSMFPLIGAILGFTGI).

Belongs to the anthrone oxygenase family.

It localises to the membrane. It catalyses the reaction emodin anthrone + O2 = emodin + H2O + H(+). The protein operates within secondary metabolite biosynthesis. Anthrone oxygenase; part of the gene cluster that mediates the biosynthesis of the dimeric xanthones cryptosporioptides. The pathway begins with the synthesis of atrochrysone thioester by the polyketide synthase dmx-nrPKS. The atrochrysone carboxyl ACP thioesterase dmxR1 then breaks the thioester bond and releases the atrochrysone carboxylic acid from dmx-nrPKS. Atrochrysone carboxylic acid is decarboxylated by the decarboxylase dmxR15, and oxidized by the anthrone oxygenase dmxR16 to yield emodin. Emodin is then reduced to emodin hydroquinone by the oxidoreductase dmxR7. A-ring reduction by the short chain dehydrogenase dmxR18, dehydration by the scytalone dehydratase-like protein dmxR17 and probable spontaneous re-oxidation, results in overall deoxygenation to chrysophanol. Baeyer-Villiger oxidation by the Baeyer-Villiger monooxygenase (BVMO) dmxR6 then yields monodictylactone in equilibrium with monodictyphenone. In the case of the cryptosporioptides biosynthesis, monodictylactone is reduced at C-12 to an alcohol (by the short chain dehydrogenases dmxR12 or dmxR8) and hydroxylated at C-5 by dmxR9, yielding the electron-rich aromatic which could eliminate H(2)O to form the ortho-quinonemethide, followed by tautomerisation to paraquinone and complete the formal reduction to produce the 10-methylgroup. Conjugate addition of C-4a-OH to the resulting paraquinone by the monooxygenase dmxR10 then gives cyclohexadienone, which is then reduced at C-5 by the short chain dehydrogenase dmxR3 to give the dihydroxanthone. The 6,7-epoxide in the cryptosporioptides could be introduced by the cytochrome P450 monooxygenase dmxL3. The highly reducing PKS dmxL2 manufactures butyrate, which is further carboxylated by dmxL1 to form ethylmalonate. It is not yet clear whether the carboxylation occurs while the butyrate is attached to the ACP of dmxL2, but this unusual fungal metabolite could then be esterified to O-5 by the O-acetyltransferase dmxR13. Finally, dimerization performed by dmxR5 gives the observed dimers cryptosporioptides A, B and C as the final products of the pathway. This Cryptosporiopsis sp. (strain 8999) protein is Anthrone oxygenase dmxR16.